The sequence spans 285 residues: MVAKILDGKQISKDYRQGLQEQVEALKEKGYTPKLSVILVGNDGASQSYVNSKKKAAEKIGMISEIVHLDEDTSEEDVLKELDRLNNDDSVSGILVQVPLPKQVSEQKILEAINPEKDVDGFHPSNIGKLYIDEQTFVPCTPLGIMEILKHADIDLEGKNAVVIGRSHIVGQPVSKLLLQANATVTILHSRTKDMHSHLKDADVIVSAVGQPGLVTKDDVKEGAVIVDVGNTPDENGKLKGDVEFEEVKEVAGAITPVPGGVGPLTITMVLNNTLLAEKMRRGIE.

NADP(+) contacts are provided by residues 165-167 (GRS) and serine 190.

It belongs to the tetrahydrofolate dehydrogenase/cyclohydrolase family. As to quaternary structure, homodimer.

The catalysed reaction is (6R)-5,10-methylene-5,6,7,8-tetrahydrofolate + NADP(+) = (6R)-5,10-methenyltetrahydrofolate + NADPH. It carries out the reaction (6R)-5,10-methenyltetrahydrofolate + H2O = (6R)-10-formyltetrahydrofolate + H(+). It participates in one-carbon metabolism; tetrahydrofolate interconversion. Catalyzes the oxidation of 5,10-methylenetetrahydrofolate to 5,10-methenyltetrahydrofolate and then the hydrolysis of 5,10-methenyltetrahydrofolate to 10-formyltetrahydrofolate. This Staphylococcus haemolyticus (strain JCSC1435) protein is Bifunctional protein FolD.